We begin with the raw amino-acid sequence, 431 residues long: Urokinase-type plasminogen activator (431 aa).

Positions 1 to 20 (MRALLARLLLCVLVVSDSKG) are cleaved as a signal peptide. The EGF-like domain occupies 27-63 (VPSNCDCLNGGTCVSNKYFSNIHWCNCPKKFGGQHCE). Cystine bridges form between C31/C39, C33/C51, C53/C62, C70/C151, C91/C133, and C122/C146. Positions 34–57 (LNGGTCVSNKYFSNIHWCNCPKKF) are binds urokinase plasminogen activator surface receptor. The 83-residue stretch at 69-151 (TCYEGNGHFY…LVQECMVHDC (83 aa)) folds into the Kringle domain. The tract at residues 152–178 (ADGKKPSSPPEELKFQCGQKTLRPRFK) is connecting peptide. S158 carries the post-translational modification Phosphoserine. 6 disulfides stabilise this stretch: C168-C299, C209-C225, C217-C288, C313-C382, C345-C361, and C372-C400. One can recognise a Peptidase S1 domain in the interval 179 to 424 (IVGGEFTTIE…FLPWIRSHTK (246 aa)). Active-site charge relay system residues include H224 and D275. A glycan (N-linked (GlcNAc...) asparagine) is linked at N322. Position 323 is a phosphoserine (S323). Residue S376 is the Charge relay system of the active site.

This sequence belongs to the peptidase S1 family. In terms of assembly, found in high and low molecular mass forms. Each consists of two chains, A and B. The high molecular mass form contains a long chain A which is cleaved to yield a short chain A. Forms heterodimer with SERPINA5. Binds LRP1B; binding is followed by internalization and degradation. Interacts with MRC2. Interacts with PLAUR. In complex with SERPINE1, interacts with PLAUR/uPAR. Interacts with SORL1 and LRP1, either alone or in complex with SERPINE1; these interactions are abolished in the presence of LRPAP1/RAP. The ternary complex composed of PLAUR-PLAU-PAI1 also interacts with SORLA. Phosphorylation of Ser-158 and Ser-323 abolishes proadhesive ability but does not interfere with receptor binding. In terms of processing, produced as an inactive single-chain protein (pro-uPA or sc-uPA), is processed into the active disulfide-linked two-chain form of PLAU/uPA by a proteolytic event mediated, at least, by TMPRSS4.

The protein localises to the secreted. It catalyses the reaction Specific cleavage of Arg-|-Val bond in plasminogen to form plasmin.. With respect to regulation, inhibited by SERPINA5. Inhibited by SERPINE1. Functionally, specifically cleaves the zymogen plasminogen to form the active enzyme plasmin. The protein is Urokinase-type plasminogen activator (PLAU) of Pongo abelii (Sumatran orangutan).